Reading from the N-terminus, the 228-residue chain is Adapter protein MecA (228 aa).

Residues 79–98 (GQKNDDSAADQTDDEGTDTQ) form a disordered region. The segment covering 85 to 95 (SAADQTDDEGT) has biased composition (acidic residues).

This sequence belongs to the MecA family. In terms of assembly, homodimer.

Functionally, enables the recognition and targeting of unfolded and aggregated proteins to the ClpC protease or to other proteins involved in proteolysis. The sequence is that of Adapter protein MecA from Lacticaseibacillus casei (strain BL23) (Lactobacillus casei).